The sequence spans 186 residues: Ribosome-recycling factor (186 aa).

The protein belongs to the RRF family.

The protein localises to the cytoplasm. Responsible for the release of ribosomes from messenger RNA at the termination of protein biosynthesis. May increase the efficiency of translation by recycling ribosomes from one round of translation to another. The chain is Ribosome-recycling factor from Chlorobaculum tepidum (strain ATCC 49652 / DSM 12025 / NBRC 103806 / TLS) (Chlorobium tepidum).